A 57-amino-acid polypeptide reads, in one-letter code: Andropin (57 aa).

A signal peptide spans 1-23 (MKYFVVLVVLALILAITVDPSDA).

The protein belongs to the andropin family. Ejaculatory duct of adult males.

It localises to the secreted. Its function is as follows. Male-specific peptide with moderate activity against Gram-positive bacteria. The sequence is that of Andropin (Anp) from Drosophila sechellia (Fruit fly).